The chain runs to 333 residues: DNA-directed RNA polymerase subunit alpha (333 aa).

Positions 1 to 246 (MEKFIKINWT…AHLNIIGDVN (246 aa)) are alpha N-terminal domain (alpha-NTD). The segment at 263 to 333 (HSKTQNILIQ…YNVFLDKGEE (71 aa)) is alpha C-terminal domain (alpha-CTD).

This sequence belongs to the RNA polymerase alpha chain family. Homodimer. The RNAP catalytic core consists of 2 alpha, 1 beta, 1 beta' and 1 omega subunit. When a sigma factor is associated with the core the holoenzyme is formed, which can initiate transcription.

The enzyme catalyses RNA(n) + a ribonucleoside 5'-triphosphate = RNA(n+1) + diphosphate. Its function is as follows. DNA-dependent RNA polymerase catalyzes the transcription of DNA into RNA using the four ribonucleoside triphosphates as substrates. In Mycoplasma mobile (strain ATCC 43663 / 163K / NCTC 11711) (Mesomycoplasma mobile), this protein is DNA-directed RNA polymerase subunit alpha.